A 137-amino-acid chain; its full sequence is Basic phospholipase A2 PeBP(R)-I/II (137 aa).

The N-terminal stretch at 1-16 is a signal peptide; it reads MRTLWIMAVLLLGVEG. Disulfide bonds link Cys42–Cys131, Cys44–Cys60, Cys59–Cys111, Cys65–Cys137, Cys66–Cys104, Cys73–Cys97, and Cys91–Cys102. His63 is a catalytic residue. Asp105 is a catalytic residue.

It belongs to the phospholipase A2 family. Group II subfamily. R49 sub-subfamily. Expressed by the venom gland.

It is found in the secreted. The catalysed reaction is a 1,2-diacyl-sn-glycero-3-phosphocholine + H2O = a 1-acyl-sn-glycero-3-phosphocholine + a fatty acid + H(+). Snake venom phospholipases A2 that have myotoxic, and edema-inducing activity, as well as extremely weak lipolytic activity. PLA2 catalyzes the calcium-dependent hydrolysis of the 2-acyl groups in 3-sn-phosphoglycerides. In Protobothrops elegans (Elegant pitviper), this protein is Basic phospholipase A2 PeBP(R)-I/II.